The sequence spans 125 residues: Large ribosomal subunit protein uL22 (125 aa).

The protein belongs to the universal ribosomal protein uL22 family. As to quaternary structure, part of the 50S ribosomal subunit.

Functionally, this protein binds specifically to 23S rRNA; its binding is stimulated by other ribosomal proteins, e.g. L4, L17, and L20. It is important during the early stages of 50S assembly. It makes multiple contacts with different domains of the 23S rRNA in the assembled 50S subunit and ribosome. Its function is as follows. The globular domain of the protein is located near the polypeptide exit tunnel on the outside of the subunit, while an extended beta-hairpin is found that lines the wall of the exit tunnel in the center of the 70S ribosome. This is Large ribosomal subunit protein uL22 from Novosphingobium aromaticivorans (strain ATCC 700278 / DSM 12444 / CCUG 56034 / CIP 105152 / NBRC 16084 / F199).